A 798-amino-acid polypeptide reads, in one-letter code: Cold shock domain-containing protein E1 (798 aa).

Residues 26–87 form the CSD 1 domain; the sequence is ETGVIEKLLT…RTGKPIAIKL (62 aa). Residue K81 is modified to N6-acetyllysine. K91 is covalently cross-linked (Glycyl lysine isopeptide (Lys-Gly) (interchain with G-Cter in SUMO2)). Position 123 is a phosphoserine (S123). A CSD 2; truncated domain is found at 136 to 179; the sequence is VFYLTYTSEDVEGNVQLETGDKINFVIDNNKHTGAVSARNIMLL. The CSD 3 domain occupies 186-245; sequence CQGVVCAMKEAFGFIERGDVVKEIFFHYSEFKGDLETLQPGDDVEFTIKDRNGKEVATDV. S276 is subject to Phosphoserine. A CSD 4; truncated domain is found at 297–337; it reads LPFGDKDTKSKVTLLEGDHVRFNISTDRRDKLERATNIEVL. CSD domains are found at residues 349-410 and 447-507; these read EMGV…AIRI and NKGK…ATCV. At S514 the chain carries Phosphoserine. The 61-residue stretch at 519-579 folds into the CSD 7 domain; sequence LLGYVATLKD…KGNKVSAEKV (61 aa). Residue S584 is modified to Phosphoserine. CSD domains follow at residues 610-670 and 674-735; these read PTQI…AYNI and RRAT…ACNV. One can recognise an SUZ-C domain in the interval 748–789; the sequence is PRPDRLVNRLKNITLDDASAPRLMVLRQPRGPDNSMGFGAER. A Phosphothreonine modification is found at T761.

The protein belongs to the UNR family. In terms of assembly, component of a multi subunit autoregulatory ribonucleoprotein complex (ARC), at least composed of IGF2BP1, PABPC1 and CSDE1. Interacts with STRAP. Part of a complex associated with the FOS mCRD domain and consisting of PABPC1, PAIP1, HNRPD and SYNCRIP. The interaction with PABPC1 is direct and RNA-independent. Interacts with EIF4ENIF1/4E-T.

It localises to the cytoplasm. It is found in the stress granule. The protein resides in the P-body. Functionally, RNA-binding protein involved in translationally coupled mRNA turnover. Implicated with other RNA-binding proteins in the cytoplasmic deadenylation/translational and decay interplay of the FOS mRNA mediated by the major coding-region determinant of instability (mCRD) domain. Required for efficient formation of stress granules. This Mus musculus (Mouse) protein is Cold shock domain-containing protein E1.